A 374-amino-acid chain; its full sequence is DNA replication and repair protein RecF (374 aa).

34-41 (GDNGAGKT) contributes to the ATP binding site.

The protein belongs to the RecF family.

The protein localises to the cytoplasm. Functionally, the RecF protein is involved in DNA metabolism; it is required for DNA replication and normal SOS inducibility. RecF binds preferentially to single-stranded, linear DNA. It also seems to bind ATP. The protein is DNA replication and repair protein RecF of Rhizobium etli (strain ATCC 51251 / DSM 11541 / JCM 21823 / NBRC 15573 / CFN 42).